The sequence spans 467 residues: Uronate isomerase (467 aa).

It belongs to the metallo-dependent hydrolases superfamily. Uronate isomerase family.

The catalysed reaction is D-glucuronate = D-fructuronate. It catalyses the reaction aldehydo-D-galacturonate = keto-D-tagaturonate. Its pathway is carbohydrate metabolism; pentose and glucuronate interconversion. The sequence is that of Uronate isomerase from Actinobacillus succinogenes (strain ATCC 55618 / DSM 22257 / CCUG 43843 / 130Z).